Here is a 494-residue protein sequence, read N- to C-terminus: Cobyric acid synthase (494 aa).

One can recognise a GATase cobBQ-type domain in the interval 249 to 443 (EINVTILRLP…LHGIFDNGAW (195 aa)). Catalysis depends on Cys-330, which acts as the Nucleophile. The active site involves His-435.

Belongs to the CobB/CobQ family. CobQ subfamily.

It participates in cofactor biosynthesis; adenosylcobalamin biosynthesis. Catalyzes amidations at positions B, D, E, and G on adenosylcobyrinic A,C-diamide. NH(2) groups are provided by glutamine, and one molecule of ATP is hydrogenolyzed for each amidation. In Crocosphaera subtropica (strain ATCC 51142 / BH68) (Cyanothece sp. (strain ATCC 51142)), this protein is Cobyric acid synthase.